Consider the following 298-residue polypeptide: Lipoyl synthase (298 aa).

[4Fe-4S] cluster contacts are provided by cysteine 40, cysteine 45, cysteine 51, cysteine 67, cysteine 71, cysteine 74, and serine 280. In terms of domain architecture, Radical SAM core spans 53-269; the sequence is AVRRTATFMI…KEIALSKGFT (217 aa).

This sequence belongs to the radical SAM superfamily. Lipoyl synthase family. It depends on [4Fe-4S] cluster as a cofactor.

The protein localises to the cytoplasm. The catalysed reaction is [[Fe-S] cluster scaffold protein carrying a second [4Fe-4S](2+) cluster] + N(6)-octanoyl-L-lysyl-[protein] + 2 oxidized [2Fe-2S]-[ferredoxin] + 2 S-adenosyl-L-methionine + 4 H(+) = [[Fe-S] cluster scaffold protein] + N(6)-[(R)-dihydrolipoyl]-L-lysyl-[protein] + 4 Fe(3+) + 2 hydrogen sulfide + 2 5'-deoxyadenosine + 2 L-methionine + 2 reduced [2Fe-2S]-[ferredoxin]. The protein operates within protein modification; protein lipoylation via endogenous pathway; protein N(6)-(lipoyl)lysine from octanoyl-[acyl-carrier-protein]. In terms of biological role, catalyzes the radical-mediated insertion of two sulfur atoms into the C-6 and C-8 positions of the octanoyl moiety bound to the lipoyl domains of lipoate-dependent enzymes, thereby converting the octanoylated domains into lipoylated derivatives. The sequence is that of Lipoyl synthase from Geobacillus sp. (strain WCH70).